Reading from the N-terminus, the 276-residue chain is Ribosomal RNA small subunit methyltransferase A (276 aa).

S-adenosyl-L-methionine-binding residues include Asn-27, Leu-29, Gly-54, Glu-75, Asp-101, and Asn-123.

This sequence belongs to the class I-like SAM-binding methyltransferase superfamily. rRNA adenine N(6)-methyltransferase family. RsmA subfamily.

Its subcellular location is the cytoplasm. It carries out the reaction adenosine(1518)/adenosine(1519) in 16S rRNA + 4 S-adenosyl-L-methionine = N(6)-dimethyladenosine(1518)/N(6)-dimethyladenosine(1519) in 16S rRNA + 4 S-adenosyl-L-homocysteine + 4 H(+). Its function is as follows. Specifically dimethylates two adjacent adenosines (A1518 and A1519) in the loop of a conserved hairpin near the 3'-end of 16S rRNA in the 30S particle. May play a critical role in biogenesis of 30S subunits. This is Ribosomal RNA small subunit methyltransferase A from Bartonella tribocorum (strain CIP 105476 / IBS 506).